A 316-amino-acid polypeptide reads, in one-letter code: Aspartate carbamoyltransferase catalytic subunit (316 aa).

The carbamoyl phosphate site is built by R56 and T57. Residue K84 participates in L-aspartate binding. Residues R106, H139, and Q142 each coordinate carbamoyl phosphate. L-aspartate-binding residues include R172 and R226. 2 residues coordinate carbamoyl phosphate: G267 and P268.

The protein belongs to the aspartate/ornithine carbamoyltransferase superfamily. ATCase family. In terms of assembly, heterododecamer (2C3:3R2) of six catalytic PyrB chains organized as two trimers (C3), and six regulatory PyrI chains organized as three dimers (R2).

The catalysed reaction is carbamoyl phosphate + L-aspartate = N-carbamoyl-L-aspartate + phosphate + H(+). The protein operates within pyrimidine metabolism; UMP biosynthesis via de novo pathway; (S)-dihydroorotate from bicarbonate: step 2/3. In terms of biological role, catalyzes the condensation of carbamoyl phosphate and aspartate to form carbamoyl aspartate and inorganic phosphate, the committed step in the de novo pyrimidine nucleotide biosynthesis pathway. The sequence is that of Aspartate carbamoyltransferase catalytic subunit from Mycobacterium sp. (strain MCS).